The primary structure comprises 257 residues: Imidazole glycerol phosphate synthase subunit HisF (257 aa).

Catalysis depends on residues Asp11 and Asp130.

Belongs to the HisA/HisF family. Heterodimer of HisH and HisF.

It is found in the cytoplasm. It catalyses the reaction 5-[(5-phospho-1-deoxy-D-ribulos-1-ylimino)methylamino]-1-(5-phospho-beta-D-ribosyl)imidazole-4-carboxamide + L-glutamine = D-erythro-1-(imidazol-4-yl)glycerol 3-phosphate + 5-amino-1-(5-phospho-beta-D-ribosyl)imidazole-4-carboxamide + L-glutamate + H(+). Its pathway is amino-acid biosynthesis; L-histidine biosynthesis; L-histidine from 5-phospho-alpha-D-ribose 1-diphosphate: step 5/9. In terms of biological role, IGPS catalyzes the conversion of PRFAR and glutamine to IGP, AICAR and glutamate. The HisF subunit catalyzes the cyclization activity that produces IGP and AICAR from PRFAR using the ammonia provided by the HisH subunit. This Mannheimia succiniciproducens (strain KCTC 0769BP / MBEL55E) protein is Imidazole glycerol phosphate synthase subunit HisF.